The primary structure comprises 423 residues: Putative gustatory receptor 97a (423 aa).

Topologically, residues 1–31 (MRFLRRQTRRLRSIWQRSLPVRFRRGKLHTQ) are cytoplasmic. Residues 32–52 (LVTICLYATVFLNILYGVYLG) traverse the membrane as a helical segment. Residues 53 to 65 (RFSFRRKKFVFSK) are Extracellular-facing. A helical transmembrane segment spans residues 66–86 (GLTIYSLFVATFFALFYIWNI). Residues 87 to 99 (YNEISTGQINLRD) are Cytoplasmic-facing. Residues 100-120 (TIGIYCYMNVCVCLFNYVTQW) form a helical membrane-spanning segment. At 121-152 (EKTLQIIRFQNSVPLFKVLDSLDISAMIVWRA) the chain is on the extracellular side. A helical membrane pass occupies residues 153–173 (FIYGLLKIVFCPLITYITLIL). Residues 174 to 200 (YHRRSISESQWTSVTTTKTMLPLIVSN) lie on the Cytoplasmic side of the membrane. Residues 201 to 221 (QINNCFFGGLVLANLIFAAVN) form a helical membrane-spanning segment. Topologically, residues 222–278 (RKLHGIVKEANMLQSPVQMNLHKPYYRMRRFCELADLLDELARKYGFTASRSKNYLR) are extracellular. A helical membrane pass occupies residues 279-299 (FTDWSMVLSMLMNLLGITMGC). Residues 300 to 317 (YNQYLAIADHYINEEPFD) lie on the Cytoplasmic side of the membrane. A helical transmembrane segment spans residues 318–338 (LFLAIVLVVFLAVPFLELVMV). Topologically, residues 339 to 423 (ARISNQTLTR…SDLTLRFSLK (85 aa)) are extracellular. 2 N-linked (GlcNAc...) asparagine glycosylation sites follow: asparagine 343 and asparagine 393.

The protein belongs to the insect chemoreceptor superfamily. Gustatory receptor (GR) family. Gr22e subfamily. In terms of tissue distribution, in larvae, is expressed in neurons of the terminal external chemosensory organ.

It is found in the cell membrane. Its function is as follows. Probable gustatory receptor which mediates acceptance or avoidance behavior, depending on its substrates. This is Putative gustatory receptor 97a (Gr97a) from Drosophila melanogaster (Fruit fly).